The primary structure comprises 1070 residues: DNA-directed RNA polymerase subunit beta (1070 aa).

It belongs to the RNA polymerase beta chain family. In terms of assembly, in plastids the minimal PEP RNA polymerase catalytic core is composed of four subunits: alpha, beta, beta', and beta''. When a (nuclear-encoded) sigma factor is associated with the core the holoenzyme is formed, which can initiate transcription.

It localises to the plastid. Its subcellular location is the chloroplast. It carries out the reaction RNA(n) + a ribonucleoside 5'-triphosphate = RNA(n+1) + diphosphate. Functionally, DNA-dependent RNA polymerase catalyzes the transcription of DNA into RNA using the four ribonucleoside triphosphates as substrates. This Gossypium hirsutum (Upland cotton) protein is DNA-directed RNA polymerase subunit beta.